Consider the following 551-residue polypeptide: Calcium-dependent protein kinase 13 (551 aa).

Residue G2 is the site of N-myristoyl glycine attachment. The interval 15–78 (SFKQTASQRH…APADLGSVLG (64 aa)) is disordered. Positions 88 to 346 (YAMGRKLGQG…AHEVLCHPWI (259 aa)) constitute a Protein kinase domain. ATP-binding positions include 94-102 (LGQGQFGTT) and K117. Catalysis depends on D212, which acts as the Proton acceptor. The tract at residues 352-382 (APDRPLDPAVLSRIKQFSAMNKLKKMALRVI) is autoinhibitory domain. 4 consecutive EF-hand domains span residues 389–424 (EEIA…YGST), 425–460 (LKDT…LNKL), 461–496 (EREE…HNMP), and 497–530 (DAFL…GNMG). The Ca(2+) site is built by D402, D404, S406, E413, D438, D440, S442, T444, E449, D474, D476, S478, Y480, E485, D508, D510, D512, R514, and E519.

This sequence belongs to the protein kinase superfamily. Ser/Thr protein kinase family. CDPK subfamily. As to expression, expressed in vascular tissues of crowns and roots, vascular bundles and central cylinder. Expressed in roots, leaf blades, spikelets and developing seeds.

The protein localises to the membrane. It carries out the reaction L-seryl-[protein] + ATP = O-phospho-L-seryl-[protein] + ADP + H(+). The enzyme catalyses L-threonyl-[protein] + ATP = O-phospho-L-threonyl-[protein] + ADP + H(+). With respect to regulation, activated by calcium. Autophosphorylation may play an important role in the regulation of the kinase activity. Its function is as follows. May play a role in signal transduction pathways that involve calcium as a second messenger. May function in signal transduction pathways that positively regulate responses to cold, salt and drought stresses. This is Calcium-dependent protein kinase 13 from Oryza sativa subsp. japonica (Rice).